Consider the following 529-residue polypeptide: T-complex protein 1 subunit beta (529 aa).

This sequence belongs to the TCP-1 chaperonin family. In terms of assembly, heterooligomeric complex of about 850 to 900 kDa that forms two stacked rings, 12 to 16 nm in diameter.

The protein localises to the cytoplasm. Its function is as follows. Molecular chaperone; assists the folding of proteins upon ATP hydrolysis. Known to play a role, in vitro, in the folding of actin and tubulin. This is T-complex protein 1 subunit beta (cct-2) from Caenorhabditis elegans.